The primary structure comprises 126 residues: Aspartate 1-decarboxylase 2 (126 aa).

Residue serine 25 is the Schiff-base intermediate with substrate; via pyruvic acid of the active site. Serine 25 carries the pyruvic acid (Ser) modification. Threonine 57 lines the substrate pocket. The Proton donor role is filled by tyrosine 58. Residue 73-75 (GSA) participates in substrate binding.

The protein belongs to the PanD family. In terms of assembly, heterooctamer of four alpha and four beta subunits. Requires pyruvate as cofactor. Post-translationally, is synthesized initially as an inactive proenzyme, which is activated by self-cleavage at a specific serine bond to produce a beta-subunit with a hydroxyl group at its C-terminus and an alpha-subunit with a pyruvoyl group at its N-terminus.

It localises to the cytoplasm. The catalysed reaction is L-aspartate + H(+) = beta-alanine + CO2. It participates in cofactor biosynthesis; (R)-pantothenate biosynthesis; beta-alanine from L-aspartate: step 1/1. Its function is as follows. Catalyzes the pyruvoyl-dependent decarboxylation of aspartate to produce beta-alanine. This Polaromonas sp. (strain JS666 / ATCC BAA-500) protein is Aspartate 1-decarboxylase 2.